Consider the following 502-residue polypeptide: Lysine--tRNA ligase (502 aa).

Positions 412 and 419 each coordinate Mg(2+).

The protein belongs to the class-II aminoacyl-tRNA synthetase family. As to quaternary structure, homodimer. Requires Mg(2+) as cofactor.

Its subcellular location is the cytoplasm. It carries out the reaction tRNA(Lys) + L-lysine + ATP = L-lysyl-tRNA(Lys) + AMP + diphosphate. This chain is Lysine--tRNA ligase, found in Buchnera aphidicola subsp. Cinara cedri (strain Cc).